The following is a 208-amino-acid chain: Small ribosomal subunit protein uS4A (208 aa).

The S4 RNA-binding domain occupies 98–159 (SRLDNVAYNM…HAKSYLRIKA (62 aa)).

Belongs to the universal ribosomal protein uS4 family. In terms of assembly, part of the 30S ribosomal subunit. Contacts protein S5. The interaction surface between S4 and S5 is involved in control of translational fidelity.

Functionally, one of the primary rRNA binding proteins, it binds directly to 16S rRNA where it nucleates assembly of the body of the 30S subunit. In terms of biological role, with S5 and S12 plays an important role in translational accuracy. The protein is Small ribosomal subunit protein uS4A (rpsD1) of Nitrosomonas europaea (strain ATCC 19718 / CIP 103999 / KCTC 2705 / NBRC 14298).